The following is a 323-amino-acid chain: tRNA-dihydrouridine synthase B (323 aa).

Residues 16 to 18 (PMA) and Gln70 contribute to the FMN site. Residue Cys100 is the Proton donor of the active site. Residues Lys139, 200-202 (NGD), and 224-225 (GR) contribute to the FMN site.

Belongs to the Dus family. DusB subfamily. FMN serves as cofactor.

It carries out the reaction a 5,6-dihydrouridine in tRNA + NAD(+) = a uridine in tRNA + NADH + H(+). The enzyme catalyses a 5,6-dihydrouridine in tRNA + NADP(+) = a uridine in tRNA + NADPH + H(+). Its function is as follows. Catalyzes the synthesis of 5,6-dihydrouridine (D), a modified base found in the D-loop of most tRNAs, via the reduction of the C5-C6 double bond in target uridines. The polypeptide is tRNA-dihydrouridine synthase B (Proteus vulgaris).